Here is a 78-residue protein sequence, read N- to C-terminus: Beta-defensin 105 (78 aa).

An N-terminal signal peptide occupies residues M1–A27. Cystine bridges form between C43/C74, C53/C67, and C57/C73.

It belongs to the beta-defensin family. Specifically expressed in testis.

The protein localises to the secreted. Its function is as follows. Has antibacterial activity. This chain is Beta-defensin 105 (DEFB105A), found in Homo sapiens (Human).